Reading from the N-terminus, the 640-residue chain is Threonine--tRNA ligase (640 aa).

A TGS domain is found at 1–60; that stretch reads MKITFPDGAVKEFEPGVSTADIAASISPGLKKKALAGKLNGELLDLVTPIHEDGAIEIVT. A catalytic region spans residues 241–538; the sequence is DHRKLGKELE…LIEEYKGAFP (298 aa). Zn(2+) is bound by residues C334, H385, and H515.

It belongs to the class-II aminoacyl-tRNA synthetase family. As to quaternary structure, homodimer. The cofactor is Zn(2+).

The protein resides in the cytoplasm. It catalyses the reaction tRNA(Thr) + L-threonine + ATP = L-threonyl-tRNA(Thr) + AMP + diphosphate + H(+). Functionally, catalyzes the attachment of threonine to tRNA(Thr) in a two-step reaction: L-threonine is first activated by ATP to form Thr-AMP and then transferred to the acceptor end of tRNA(Thr). Also edits incorrectly charged L-seryl-tRNA(Thr). The protein is Threonine--tRNA ligase of Listeria welshimeri serovar 6b (strain ATCC 35897 / DSM 20650 / CCUG 15529 / CIP 8149 / NCTC 11857 / SLCC 5334 / V8).